Reading from the N-terminus, the 206-residue chain is Enterobactin synthase component D (206 aa).

The Mg(2+) site is built by D107, E109, and E152.

This sequence belongs to the P-Pant transferase superfamily. EntD family. In terms of assembly, entB, EntD, EntE, and EntF form a multienzyme complex called enterobactin synthase. Mg(2+) is required as a cofactor.

Its subcellular location is the membrane. The catalysed reaction is apo-[aryl-carrier protein] + CoA = holo-[aryl-carrier protein] + adenosine 3',5'-bisphosphate + H(+). The enzyme catalyses apo-[peptidyl-carrier protein] + CoA = holo-[peptidyl-carrier protein] + adenosine 3',5'-bisphosphate + H(+). It participates in siderophore biosynthesis; enterobactin biosynthesis. Functionally, involved in the biosynthesis of the siderophore enterobactin (enterochelin), which is a macrocyclic trimeric lactone of N-(2,3-dihydroxybenzoyl)-serine. The serine trilactone serves as a scaffolding for the three catechol functionalities that provide hexadentate coordination for the tightly ligated iron(2+) atoms. Plays an essential role in the assembly of the enterobactin by catalyzing the transfer of the 4'-phosphopantetheine (Ppant) moiety from coenzyme A to the apo-domains of both EntB (ArCP domain) and EntF (PCP domain) to yield their holo-forms which make them competent for the activation of 2,3-dihydroxybenzoate (DHB) and L-serine, respectively. The sequence is that of Enterobactin synthase component D from Escherichia coli O157:H7.